We begin with the raw amino-acid sequence, 586 residues long: Putative Lon protease homolog (586 aa).

One can recognise a Lon proteolytic domain in the interval Gly-346 to Leu-543. Active-site residues include Ser-438 and Lys-481.

It belongs to the peptidase S16 family.

The protein is Putative Lon protease homolog (ycbZ) of Escherichia coli (strain K12).